The primary structure comprises 260 residues: Meiotic recombination protein rec6 (260 aa).

A disordered region spans residues 197 to 222; the sequence is QYSESSLLDDSQLLCSSPPVDSTEEA. Positions 199 to 213 are enriched in low complexity; sequence SESSLLDDSQLLCSS.

Belongs to the TOP6B-like family. As to quaternary structure, component of the DSB catalytic core (DSBC) complex, composed of at least rec12, rec6 and rec14. The complex interacts with mde2.

Functionally, required for formation of the rec12-mediated double-strand breaks (DSBs) that initiate meiotic recombination. May be involved primarily in the early steps of meiotic recombination. This Schizosaccharomyces pombe (strain 972 / ATCC 24843) (Fission yeast) protein is Meiotic recombination protein rec6.